The chain runs to 35 residues: Photosystem II reaction center protein M (35 aa).

Residues 5 to 25 (ILAFIATALFILVPTAFLLII) form a helical membrane-spanning segment.

Belongs to the PsbM family. As to quaternary structure, PSII is composed of 1 copy each of membrane proteins PsbA, PsbB, PsbC, PsbD, PsbE, PsbF, PsbH, PsbI, PsbJ, PsbK, PsbL, PsbM, PsbT, PsbX, PsbY, PsbZ, Psb30/Ycf12, at least 3 peripheral proteins of the oxygen-evolving complex and a large number of cofactors. It forms dimeric complexes.

The protein resides in the plastid. The protein localises to the chloroplast thylakoid membrane. In terms of biological role, one of the components of the core complex of photosystem II (PSII). PSII is a light-driven water:plastoquinone oxidoreductase that uses light energy to abstract electrons from H(2)O, generating O(2) and a proton gradient subsequently used for ATP formation. It consists of a core antenna complex that captures photons, and an electron transfer chain that converts photonic excitation into a charge separation. This subunit is found at the monomer-monomer interface. The sequence is that of Photosystem II reaction center protein M from Amborella trichopoda.